A 281-amino-acid polypeptide reads, in one-letter code: Protein ZAR1-like 1.L (281 aa).

The 3CxxC-type zinc-finger motif lies at 183–267 (QKYGFFHCKN…QELCGRCKGQ (85 aa)).

The protein belongs to the ZAR1 family. As to quaternary structure, component of a cytoplasmic ribonucleoprotein complex together with eif4enif1/4E-T and cpeb1. In terms of tissue distribution, expressed in oocytes.

It localises to the cytoplasm. It is found in the cytoplasmic ribonucleoprotein granule. In terms of biological role, mRNA-binding protein required for maternal mRNA storage, translation and degradation during oocyte maturation. Controls timing of meiosis during oogenesis. Probably promotes formation of some phase-separated membraneless compartment that stores maternal mRNAs in oocytes: acts by undergoing liquid-liquid phase separation upon binding to maternal mRNAs. Binds to the 3'-UTR of maternal mRNAs, inhibiting their translation. In Xenopus laevis (African clawed frog), this protein is Protein ZAR1-like 1.L.